A 132-amino-acid chain; its full sequence is Large ribosomal subunit protein uL14 (132 aa).

The protein belongs to the universal ribosomal protein uL14 family. In terms of assembly, part of the 50S ribosomal subunit. Forms a cluster with proteins L3 and L24e, part of which may contact the 16S rRNA in 2 intersubunit bridges.

In terms of biological role, binds to 23S rRNA. Forms part of two intersubunit bridges in the 70S ribosome. The sequence is that of Large ribosomal subunit protein uL14 from Methanothrix thermoacetophila (strain DSM 6194 / JCM 14653 / NBRC 101360 / PT) (Methanosaeta thermophila).